The chain runs to 284 residues: MAELVPFAVPIESDKTLLVWELSSGPTAEALHHSLFTAFSQFGLLYSVRVFPNAAVAHPGFYAVIKFYSARAAHRAQKACDRKQLFQKSPVKVRLGTRHKAVQHQALALNSSKCQELANYYFGFNGCSKRIIKLQELSDLEERENEDSMVPLPKQSLKFFCALEVVLPSCDCRSPGIGLVEEPMDKVEEGPLSFLMKRKTAQKLAIQKALSDAFQKLLIVVLESGKIAVEYRPSEDIVGVRCEEELHGLIQVPCSPWKQYGQEEEGYLSDFSLEEEEFRLPELD.

The segment at 1–92 (MAELVPFAVP…KQLFQKSPVK (92 aa)) is necessary for nuclear localization and for nucleolar accumulation in response to heat shock. Residues 15–98 (KTLLVWELSS…SPVKVRLGTR (84 aa)) enclose the RRM domain. The segment at 90 to 133 (PVKVRLGTRHKAVQHQALALNSSKCQELANYYFGFNGCSKRIIK) is necessary for nuclear and nucleolar localization.

As to quaternary structure, homodimer. As to expression, expressed in testis.

It is found in the nucleus. The protein localises to the cytoplasm. The protein resides in the nucleolus. It localises to the PML body. Its subcellular location is the cajal body. May confer resistance to the antitumor agent cisplatin. Binds to DNA and RNA. This chain is RAD52 motif-containing protein 1 (RDM1), found in Homo sapiens (Human).